A 416-amino-acid chain; its full sequence is Squalene synthase (416 aa).

Residues Arg52 and Arg77 each contribute to the NADP(+) site. Asp80, Glu83, and Asp84 together coordinate Mg(2+). Arg218 is a binding site for NADP(+). Residues 284–304 form a helical membrane-spanning segment; it reads SVFNFCAIPQVMAIATLAACY. NADP(+) contacts are provided by Lys315 and Arg317. Residues 384 to 404 traverse the membrane as a helical segment; sequence PIYLSFIMLLAALSWQYLSTL.

It belongs to the phytoene/squalene synthase family. Requires Mg(2+) as cofactor.

It localises to the endoplasmic reticulum membrane. It carries out the reaction 2 (2E,6E)-farnesyl diphosphate + NADPH + H(+) = squalene + 2 diphosphate + NADP(+). The catalysed reaction is 2 (2E,6E)-farnesyl diphosphate + NADH + H(+) = squalene + 2 diphosphate + NAD(+). The enzyme catalyses presqualene diphosphate + NADH + H(+) = squalene + diphosphate + NAD(+). It catalyses the reaction presqualene diphosphate + NADPH + H(+) = squalene + diphosphate + NADP(+). It carries out the reaction 2 (2E,6E)-farnesyl diphosphate = presqualene diphosphate + diphosphate. It functions in the pathway terpene metabolism; lanosterol biosynthesis; lanosterol from farnesyl diphosphate: step 1/3. Catalyzes the condensation of 2 farnesyl pyrophosphate (FPP) moieties to form squalene. Proceeds in two distinct steps. In the first half-reaction, two molecules of FPP react to form the stable presqualene diphosphate intermediate (PSQPP), with concomitant release of a proton and a molecule of inorganic diphosphate. In the second half-reaction, PSQPP undergoes heterolysis, isomerization, and reduction with NADPH or NADH to form squalene. It is the first committed enzyme of the sterol biosynthesis pathway. The sequence is that of Squalene synthase (Fdft1) from Mus musculus (Mouse).